The chain runs to 209 residues: MTMTRLETLKHNLQAALGADIALTEALGELTLEVPADQWLAVCNKLRTDAGLSFETCIDLCGVDYLTWGNGTRQAGEDKVAGVQRSRYAVVAHLLSIAHNWRLRVRTWAPDDDFPMVGSLIDCWPGVNWFEREAFDLFGIVFEGHPDLRRILTDYGFIGHPFRKDFPLSGTVEMRYDPEQRRVIYQPVTIDPREITPRVVREDSYGLGR.

This sequence belongs to the complex I 30 kDa subunit family. NDH-1 is composed of 14 different subunits. Subunits NuoB, C, D, E, F, and G constitute the peripheral sector of the complex.

The protein localises to the cell inner membrane. It carries out the reaction a quinone + NADH + 5 H(+)(in) = a quinol + NAD(+) + 4 H(+)(out). Functionally, NDH-1 shuttles electrons from NADH, via FMN and iron-sulfur (Fe-S) centers, to quinones in the respiratory chain. The immediate electron acceptor for the enzyme in this species is believed to be ubiquinone. Couples the redox reaction to proton translocation (for every two electrons transferred, four hydrogen ions are translocated across the cytoplasmic membrane), and thus conserves the redox energy in a proton gradient. The protein is NADH-quinone oxidoreductase subunit C of Bordetella petrii (strain ATCC BAA-461 / DSM 12804 / CCUG 43448).